A 208-amino-acid chain; its full sequence is ATP phosphoribosyltransferase (208 aa).

Belongs to the ATP phosphoribosyltransferase family. Short subfamily. Heteromultimer composed of HisG and HisZ subunits.

It localises to the cytoplasm. The enzyme catalyses 1-(5-phospho-beta-D-ribosyl)-ATP + diphosphate = 5-phospho-alpha-D-ribose 1-diphosphate + ATP. It functions in the pathway amino-acid biosynthesis; L-histidine biosynthesis; L-histidine from 5-phospho-alpha-D-ribose 1-diphosphate: step 1/9. In terms of biological role, catalyzes the condensation of ATP and 5-phosphoribose 1-diphosphate to form N'-(5'-phosphoribosyl)-ATP (PR-ATP). Has a crucial role in the pathway because the rate of histidine biosynthesis seems to be controlled primarily by regulation of HisG enzymatic activity. This chain is ATP phosphoribosyltransferase, found in Clostridioides difficile (strain 630) (Peptoclostridium difficile).